Consider the following 280-residue polypeptide: tRNA pseudouridine synthase A (280 aa).

Aspartate 60 serves as the catalytic Nucleophile. Tyrosine 119 provides a ligand contact to substrate.

It belongs to the tRNA pseudouridine synthase TruA family. Homodimer.

It catalyses the reaction uridine(38/39/40) in tRNA = pseudouridine(38/39/40) in tRNA. Its function is as follows. Formation of pseudouridine at positions 38, 39 and 40 in the anticodon stem and loop of transfer RNAs. The sequence is that of tRNA pseudouridine synthase A from Treponema pallidum (strain Nichols).